Here is a 211-residue protein sequence, read N- to C-terminus: Thiamine-phosphate synthase (211 aa).

4-amino-2-methyl-5-(diphosphooxymethyl)pyrimidine-binding positions include 39–41 (QLR) and Asn-71. Mg(2+) is bound by residues Asp-72 and Asp-91. Residue Ser-110 participates in 4-amino-2-methyl-5-(diphosphooxymethyl)pyrimidine binding. 136–138 (TGT) is a binding site for 2-[(2R,5Z)-2-carboxy-4-methylthiazol-5(2H)-ylidene]ethyl phosphate. 4-amino-2-methyl-5-(diphosphooxymethyl)pyrimidine is bound at residue Lys-139. Residues Gly-167 and 187–188 (VS) contribute to the 2-[(2R,5Z)-2-carboxy-4-methylthiazol-5(2H)-ylidene]ethyl phosphate site.

It belongs to the thiamine-phosphate synthase family. Mg(2+) is required as a cofactor.

It carries out the reaction 2-[(2R,5Z)-2-carboxy-4-methylthiazol-5(2H)-ylidene]ethyl phosphate + 4-amino-2-methyl-5-(diphosphooxymethyl)pyrimidine + 2 H(+) = thiamine phosphate + CO2 + diphosphate. The enzyme catalyses 2-(2-carboxy-4-methylthiazol-5-yl)ethyl phosphate + 4-amino-2-methyl-5-(diphosphooxymethyl)pyrimidine + 2 H(+) = thiamine phosphate + CO2 + diphosphate. It catalyses the reaction 4-methyl-5-(2-phosphooxyethyl)-thiazole + 4-amino-2-methyl-5-(diphosphooxymethyl)pyrimidine + H(+) = thiamine phosphate + diphosphate. The protein operates within cofactor biosynthesis; thiamine diphosphate biosynthesis; thiamine phosphate from 4-amino-2-methyl-5-diphosphomethylpyrimidine and 4-methyl-5-(2-phosphoethyl)-thiazole: step 1/1. Functionally, condenses 4-methyl-5-(beta-hydroxyethyl)thiazole monophosphate (THZ-P) and 2-methyl-4-amino-5-hydroxymethyl pyrimidine pyrophosphate (HMP-PP) to form thiamine monophosphate (TMP). The sequence is that of Thiamine-phosphate synthase from Xanthobacter autotrophicus (strain ATCC BAA-1158 / Py2).